The chain runs to 313 residues: Transcription factor MafB (313 aa).

Disordered regions lie at residues 51–77 (QPTG…FSPT) and 151–197 (MGLP…VEDR). Residues 55 to 76 (SVSSTPISTPCSSVPSSPSFSP) are compositionally biased toward low complexity. Over residues 154–166 (PHHHPHHHQHQHH) the composition is skewed to basic residues. Residues 167–192 (QTSPSPSGSSSSSQQLHHQQQHSSSS) are compositionally biased toward low complexity. The basic motif stretch occupies residues 225 to 250 (RLKQKRRTLKNRGYAQSCRYKRVQQK). A bZIP domain is found at 225 to 288 (RLKQKRRTLK…DAYKIKCEKL (64 aa)). Positions 253–274 (LEGEKTQLVQQVEQLKQEVSRL) are leucine-zipper. The disordered stretch occupies residues 292–313 (NSSNFREAGSTSDNPSSPEFFM).

The protein belongs to the bZIP family. Maf subfamily. Homodimer or heterodimer with other bHLH-Zip transcription factors. Binds DNA as a homodimer or a heterodimer.

The protein localises to the nucleus. Acts as a transcriptional activator or repressor. Implicated in the regulation of cell-type specific gene expression and play a role in inductive events during lens development. The chain is Transcription factor MafB (mafb) from Xenopus laevis (African clawed frog).